We begin with the raw amino-acid sequence, 370 residues long: DNA-directed RNA polymerase II subunit GRINL1A (370 aa).

The disordered stretch occupies residues 1–20 (MSSLPRGFEPQTPEDLGQRS). The stretch at 15–69 (DLGQRSLAELREMLKRQERLLRNVKFICKLPDKGKKISDAVTKLKAAIAEREEVR) forms a coiled coil. The segment at 29–68 (KRQERLLRNVKFICKLPDKGKKISDAVTKLKAAIAEREEV) is important for transcription repressor activity. 3 disordered regions span residues 93 to 172 (DGDR…ASEG), 204 to 226 (DPTE…WSGP), and 241 to 283 (KNPM…RRDR). Residues 101–131 (NSDQILDTSSPVPGCSSVANITSSQTTSRQQ) show a composition bias toward polar residues. Positions 138–152 (RGGDAEAAEAEHTVS) are enriched in basic and acidic residues. Low complexity predominate over residues 155–170 (PTSSSGAPAPSSSQAS). Residues 205 to 214 (PTEHHSEGNR) show a composition bias toward basic and acidic residues. The interval 228 to 299 (KKPHYMEVLE…TAARLLPLHH (72 aa)) is interaction with Pol II. The span at 254-266 (VLPSQPRDSSSAC) shows a compositional bias: polar residues. S271 carries the post-translational modification Phosphoserine. The important for transcription repressor activity stretch occupies residues 300 to 315 (LPTQLLSIEESLALQR). Positions 303–328 (QLLSIEESLALQRQQKQSYEEIQAKL) form a coiled coil. Residues 316–341 (QQKQSYEEIQAKLAAQKLAERLNIKM) are interaction with Pol II. The interval 340-370 (KMQSYNPEGESSRKYREVRDEDDDQSSEDEF) is disordered. Residues 349–358 (ESSRKYREVR) are compositionally biased toward basic and acidic residues. Positions 359–370 (DEDDDQSSEDEF) are enriched in acidic residues.

It belongs to the GRINL1 family. In terms of assembly, component of the Pol II(G) complex, which contains the RNA polymerase II (Pol II) core complex subunits and POLR2M and appears to be an abundant form of Pol II. Dephosphorylated at Ser-271 by the PNUTS-PP1 complex, promoting RNA polymerase II transcription pause-release.

The protein localises to the nucleus. In terms of biological role, appears to be a stable component of the Pol II(G) complex form of RNA polymerase II (Pol II). Pol II synthesizes mRNA precursors and many functional non-coding RNAs and is the central component of the basal RNA polymerase II transcription machinery. May play a role in Mediator complex-dependent regulation of transcription activation. Acts in vitro as a negative regulator of transcriptional activation; this repression is relieved by the Mediator complex, which restores Pol II(G) activator-dependent transcription to a level equivalent to that of Pol II. The chain is DNA-directed RNA polymerase II subunit GRINL1A (POLR2M) from Bos taurus (Bovine).